The primary structure comprises 327 residues: E3 ubiquitin ligase RNF121 (327 aa).

A2 carries the N-acetylalanine modification. The next 5 helical transmembrane spans lie at 50–70, 79–99, 100–120, 148–168, and 172–192; these read MHAEMVLILIATLVVAQLLLV, SYNMVTLFQMWVVPLYFTVKL, HWWRFLVIWILFSAVTAFVTF, ATGIVGYMAVMFTLFGLNLLF, and PEDAMDFGISLLFYGLYYGVL. The segment at 226–276 adopts an RING-type; atypical zinc-finger fold; it reads CAVCGQQIFVDVSEEGIIENTYRLSCNHVFHEFCIRGWCIVGKKQTCPYCK. A helical membrane pass occupies residues 306-326; the sequence is LVAWQPVIIGVVQGINYILGL.

It belongs to the RNF121 family.

Its subcellular location is the endoplasmic reticulum membrane. The enzyme catalyses S-ubiquitinyl-[E2 ubiquitin-conjugating enzyme]-L-cysteine + [acceptor protein]-L-lysine = [E2 ubiquitin-conjugating enzyme]-L-cysteine + N(6)-ubiquitinyl-[acceptor protein]-L-lysine.. It functions in the pathway protein modification; protein ubiquitination. E3 ubiquitin ligase which accepts ubiquitin and transfers it to substrates thereby promoting their degradation by the endoplasmic reticulum-associated degradation (ERAD) pathway which is a pathway involved in ubiquitin-dependent degradation of misfolded endoplasmic reticulum proteins. May regulate the unfolded protein response to reduce endoplasmic reticulum stress. In Homo sapiens (Human), this protein is E3 ubiquitin ligase RNF121 (RNF121).